Here is a 271-residue protein sequence, read N- to C-terminus: Formamidopyrimidine-DNA glycosylase (271 aa).

The Schiff-base intermediate with DNA role is filled by Pro2. Residue Glu3 is the Proton donor of the active site. Lys57 serves as the catalytic Proton donor; for beta-elimination activity. The DNA site is built by His90, Arg109, and Lys151. Residues 236–270 form an FPG-type zinc finger; that stretch reads HVYGRGGDTCTHCGQLLSEIRLGQRATVFCSICQQ. Residue Arg260 is the Proton donor; for delta-elimination activity of the active site.

The protein belongs to the FPG family. In terms of assembly, monomer. Requires Zn(2+) as cofactor.

The catalysed reaction is Hydrolysis of DNA containing ring-opened 7-methylguanine residues, releasing 2,6-diamino-4-hydroxy-5-(N-methyl)formamidopyrimidine.. The enzyme catalyses 2'-deoxyribonucleotide-(2'-deoxyribose 5'-phosphate)-2'-deoxyribonucleotide-DNA = a 3'-end 2'-deoxyribonucleotide-(2,3-dehydro-2,3-deoxyribose 5'-phosphate)-DNA + a 5'-end 5'-phospho-2'-deoxyribonucleoside-DNA + H(+). In terms of biological role, involved in base excision repair of DNA damaged by oxidation or by mutagenic agents. Acts as a DNA glycosylase that recognizes and removes damaged bases. Has a preference for oxidized purines, such as 7,8-dihydro-8-oxoguanine (8-oxoG). Has AP (apurinic/apyrimidinic) lyase activity and introduces nicks in the DNA strand. Cleaves the DNA backbone by beta-delta elimination to generate a single-strand break at the site of the removed base with both 3'- and 5'-phosphates. This is Formamidopyrimidine-DNA glycosylase from Shewanella piezotolerans (strain WP3 / JCM 13877).